The primary structure comprises 458 residues: Cysteine--tRNA ligase (458 aa).

Cys29 contacts Zn(2+). Positions 31–41 (MTVYDLCHLGH) match the 'HIGH' region motif. Positions 213, 238, and 242 each coordinate Zn(2+). Residues 270–274 (KMSKS) carry the 'KMSKS' region motif. Lys273 lines the ATP pocket.

Belongs to the class-I aminoacyl-tRNA synthetase family. In terms of assembly, monomer. Zn(2+) is required as a cofactor.

The protein resides in the cytoplasm. It carries out the reaction tRNA(Cys) + L-cysteine + ATP = L-cysteinyl-tRNA(Cys) + AMP + diphosphate. This chain is Cysteine--tRNA ligase, found in Acidovorax sp. (strain JS42).